The primary structure comprises 170 residues: UPF0251 protein MA_1017 (170 aa).

The protein belongs to the UPF0251 family.

The sequence is that of UPF0251 protein MA_1017 from Methanosarcina acetivorans (strain ATCC 35395 / DSM 2834 / JCM 12185 / C2A).